The chain runs to 494 residues: Amidophosphoribosyltransferase (494 aa).

The propeptide occupies 1–10 (MSNYSGLNEE). Cys11 serves as the catalytic Nucleophile. In terms of domain architecture, Glutamine amidotransferase type-2 spans 11–231 (CGVFGIWNHP…AGEYVVITDE (221 aa)). Mg(2+)-binding residues include Ser294, Asp356, and Asp357.

The protein in the C-terminal section; belongs to the purine/pyrimidine phosphoribosyltransferase family. Requires Mg(2+) as cofactor.

The catalysed reaction is 5-phospho-beta-D-ribosylamine + L-glutamate + diphosphate = 5-phospho-alpha-D-ribose 1-diphosphate + L-glutamine + H2O. The protein operates within purine metabolism; IMP biosynthesis via de novo pathway; N(1)-(5-phospho-D-ribosyl)glycinamide from 5-phospho-alpha-D-ribose 1-diphosphate: step 1/2. In terms of biological role, catalyzes the formation of phosphoribosylamine from phosphoribosylpyrophosphate (PRPP) and glutamine. The protein is Amidophosphoribosyltransferase of Staphylococcus epidermidis (strain ATCC 35984 / DSM 28319 / BCRC 17069 / CCUG 31568 / BM 3577 / RP62A).